Reading from the N-terminus, the 165-residue chain is Nucleotide-binding protein NATL1_05371 (165 aa).

This sequence belongs to the YajQ family.

Nucleotide-binding protein. In Prochlorococcus marinus (strain NATL1A), this protein is Nucleotide-binding protein NATL1_05371.